We begin with the raw amino-acid sequence, 428 residues long: MATVTYPSSEPTTLDPGNASSTWPLDTTLGNTSAGASLTGLAVSGILISLVYLVVCVVGLLGNSLVIYVVLRHTSSPSVTSVYILNLALADELFMLGLPFLAAQNALSYWPFGSLMCRLVMAVDGINQFTSIFCLTVMSVDRYLAVVHPTRSARWRTAPVARTVSAAVWVASAVVVLPVVVFSGVPRGMSTCHMQWPEPAAAWRTAFIIYTAALGFFGPLLVICLCYLLIVVKVRSTTRRVRAPSCQWVQAPACQRRRRSERRVTRMVVAVVALFVLCWMPFYLLNIVNVVCPLPEEPAFFGLYFLVVALPYANSCANPILYGFLSYRFKQGFRRILLRPSRRIRSQEPGSGPPEKTEEEEDEEEEERREEEERRMQRGQEMNGRLSQIAQAGTSGQQPRPCTGTAKEQQLLPQEATAGDKASTLSHL.

Over residues 1-12 (MATVTYPSSEPT) the composition is skewed to polar residues. The tract at residues 1–20 (MATVTYPSSEPTTLDPGNAS) is disordered. Residues 1–45 (MATVTYPSSEPTTLDPGNASSTWPLDTTLGNTSAGASLTGLAVSG) are Extracellular-facing. N-linked (GlcNAc...) asparagine glycosylation is found at asparagine 18 and asparagine 31. A helical transmembrane segment spans residues 46-71 (ILISLVYLVVCVVGLLGNSLVIYVVL). The Cytoplasmic portion of the chain corresponds to 72–81 (RHTSSPSVTS). Residues 82-103 (VYILNLALADELFMLGLPFLAA) form a helical membrane-spanning segment. Topologically, residues 104–118 (QNALSYWPFGSLMCR) are extracellular. An intrachain disulfide couples cysteine 117 to cysteine 192. A helical transmembrane segment spans residues 119–140 (LVMAVDGINQFTSIFCLTVMSV). Residues 141-162 (DRYLAVVHPTRSARWRTAPVAR) are Cytoplasmic-facing. The helical transmembrane segment at 163–182 (TVSAAVWVASAVVVLPVVVF) threads the bilayer. The Extracellular segment spans residues 183-206 (SGVPRGMSTCHMQWPEPAAAWRTA). Residues 207-232 (FIIYTAALGFFGPLLVICLCYLLIVV) traverse the membrane as a helical segment. The Cytoplasmic portion of the chain corresponds to 233-266 (KVRSTTRRVRAPSCQWVQAPACQRRRRSERRVTR). Residues 267-288 (MVVAVVALFVLCWMPFYLLNIV) form a helical membrane-spanning segment. Over 289–302 (NVVCPLPEEPAFFG) the chain is Extracellular. The helical transmembrane segment at 303–325 (LYFLVVALPYANSCANPILYGFL) threads the bilayer. Residues 326–428 (SYRFKQGFRR…GDKASTLSHL (103 aa)) are Cytoplasmic-facing. A phosphoserine mark is found at serine 341, serine 346, and serine 351. The disordered stretch occupies residues 344–428 (IRSQEPGSGP…GDKASTLSHL (85 aa)). A Phosphothreonine modification is found at threonine 357. Residues 357-370 (TEEEEDEEEEERRE) show a composition bias toward acidic residues. The segment covering 385–412 (RLSQIAQAGTSGQQPRPCTGTAKEQQLL) has biased composition (polar residues).

This sequence belongs to the G-protein coupled receptor 1 family. In terms of assembly, homodimer and heterodimer with SSTR2. Heterodimerization with SSTR2 inactivates SSTR3 receptor function. Phosphorylated. Phosphorylation increases upon somatostatin binding. As to expression, in the brain, primarily observed in the forebrain. Moderate levels found throughout laminae 2-6 of the neocortex and allocortex, and high levels in lamina 2 of the piriform and entorhinal cortices. High levels also present in the cornu ammonis fields of the hippocampus. In the amygdala, highly expressed in the nucleus of the lateral olfactory tract with expression also detected in the rostral portions of the basal magnocellular and lateral nuclei. In the diencephalon, moderate levels observed in the ventromedial and arcuate nuclei of the hypothalamus. In the midbrain, moderate levels found in the lateral portion of the substantia nigra pars reticulata.

It is found in the cell membrane. In terms of biological role, receptor for somatostatin-14 and -28. This receptor is coupled via pertussis toxin sensitive G proteins to inhibition of adenylyl cyclase. This Mus musculus (Mouse) protein is Somatostatin receptor type 3 (Sstr3).